The sequence spans 115 residues: DNA-directed RNA polymerase subunit Rpo4 (115 aa).

The protein belongs to the eukaryotic RPB4 RNA polymerase subunit family. Part of the RNA polymerase complex. Forms a stalk with Rpo7 that extends from the main structure.

It is found in the cytoplasm. The enzyme catalyses RNA(n) + a ribonucleoside 5'-triphosphate = RNA(n+1) + diphosphate. In terms of biological role, DNA-dependent RNA polymerase (RNAP) catalyzes the transcription of DNA into RNA using the four ribonucleoside triphosphates as substrates. This subunit is less well bound than the others. The chain is DNA-directed RNA polymerase subunit Rpo4 from Methanocaldococcus jannaschii (strain ATCC 43067 / DSM 2661 / JAL-1 / JCM 10045 / NBRC 100440) (Methanococcus jannaschii).